Consider the following 560-residue polypeptide: NAD-dependent malic enzyme (560 aa).

The active-site Proton donor is tyrosine 100. Arginine 153 lines the NAD(+) pocket. Residue lysine 171 is the Proton acceptor of the active site. A divalent metal cation-binding residues include glutamate 242, aspartate 243, and aspartate 266. Residues aspartate 266 and asparagine 413 each coordinate NAD(+).

It belongs to the malic enzymes family. As to quaternary structure, homotetramer. Requires Mg(2+) as cofactor. The cofactor is Mn(2+).

It carries out the reaction (S)-malate + NAD(+) = pyruvate + CO2 + NADH. It catalyses the reaction oxaloacetate + H(+) = pyruvate + CO2. This chain is NAD-dependent malic enzyme, found in Psychrobacter arcticus (strain DSM 17307 / VKM B-2377 / 273-4).